A 119-amino-acid polypeptide reads, in one-letter code: Large ribosomal subunit protein uL24 (119 aa).

This sequence belongs to the universal ribosomal protein uL24 family. In terms of assembly, part of the 50S ribosomal subunit.

In terms of biological role, one of two assembly initiator proteins, it binds directly to the 5'-end of the 23S rRNA, where it nucleates assembly of the 50S subunit. One of the proteins that surrounds the polypeptide exit tunnel on the outside of the subunit. This is Large ribosomal subunit protein uL24 from Arthrobacter sp. (strain FB24).